Reading from the N-terminus, the 284-residue chain is Bifunctional protein FolD (284 aa).

Residues 164–166 (GRS) and Ser189 contribute to the NADP(+) site.

Belongs to the tetrahydrofolate dehydrogenase/cyclohydrolase family. In terms of assembly, homodimer.

It carries out the reaction (6R)-5,10-methylene-5,6,7,8-tetrahydrofolate + NADP(+) = (6R)-5,10-methenyltetrahydrofolate + NADPH. It catalyses the reaction (6R)-5,10-methenyltetrahydrofolate + H2O = (6R)-10-formyltetrahydrofolate + H(+). It participates in one-carbon metabolism; tetrahydrofolate interconversion. In terms of biological role, catalyzes the oxidation of 5,10-methylenetetrahydrofolate to 5,10-methenyltetrahydrofolate and then the hydrolysis of 5,10-methenyltetrahydrofolate to 10-formyltetrahydrofolate. The polypeptide is Bifunctional protein FolD (Listeria monocytogenes serovar 1/2a (strain ATCC BAA-679 / EGD-e)).